A 192-amino-acid polypeptide reads, in one-letter code: Putative 3-methyladenine DNA glycosylase (192 aa).

It belongs to the DNA glycosylase MPG family.

This chain is Putative 3-methyladenine DNA glycosylase, found in Bdellovibrio bacteriovorus (strain ATCC 15356 / DSM 50701 / NCIMB 9529 / HD100).